Consider the following 74-residue polypeptide: Serine rich endogenous peptide 16 (74 aa).

An N-terminal signal peptide occupies residues 1–31; the sequence is MATKISHLVSLLLSLLLLLLFISSQVGFTEA. The disordered stretch occupies residues 29–74; the sequence is TEAKRDERKKMSSPPIPSPLIPSPPIPPPPPRFYVPPSKSRRGKGP. Pro residues predominate over residues 42-62; the sequence is PPIPSPLIPSPPIPPPPPRFY. An SCOOP motif motif is present at residues 60–74; that stretch reads RFYVPPSKSRRGKGP. The short motif at 66-68 is the SxS motif essential for MIK2 binding element; sequence SKS.

Belongs to the serine rich endogenous peptide (SCOOP) phytocytokine family. As to quaternary structure, interacts with MIK2 (via extracellular leucine-rich repeat domain); this interaction triggers the formation of complex between MIK2 and the BAK1/SERK3 and SERK4 coreceptors, and subsequent BAK1 activation by phosphorylation.

Its subcellular location is the cell membrane. The protein localises to the secreted. It is found in the extracellular space. It localises to the apoplast. Its function is as follows. Brassicaceae-specific phytocytokine (plant endogenous peptide released into the apoplast) perceived by MIK2 in a BAK1/SERK3 and SERK4 coreceptors-dependent manner, that modulates various physiological and antimicrobial processes including growth prevention and reactive oxygen species (ROS) response regulation. This is Serine rich endogenous peptide 16 from Arabidopsis thaliana (Mouse-ear cress).